The following is a 217-amino-acid chain: LSM12 homolog A (217 aa).

Positions 9–78 (VNAVNDCFSI…CSNVQVIKEC (70 aa)) constitute a Sm domain. In terms of domain architecture, AD spans 86-184 (QKLNLEQVKM…IIKQFFNTRP (99 aa)). Positions 185-217 (SPVPESGAAASTSSPSVSPTSSSLASGSPVPAN) are disordered. Over residues 190 to 217 (SGAAASTSSPSVSPTSSSLASGSPVPAN) the composition is skewed to low complexity.

It belongs to the LSM12 family. In terms of assembly, component of the Atx2-tyf activator complex, composed of Atx2, tyf, pAbp, Lsm12a. Interacts with tyf, Atx2 and pAbp.

In terms of biological role, component of the Atx2-tyf activator complex which functions in the circadian pacemaker neurons to activate the TYF-dependent translation of per and maintain 24 hour periodicity in circadian behaviors. Within the Atx2-tyf complex, likely to function as a molecular adapter which stabilizes the interaction between Atx2 and the translational regulator tyf. This is LSM12 homolog A from Drosophila melanogaster (Fruit fly).